The chain runs to 188 residues: Elongation factor P (188 aa).

It belongs to the elongation factor P family.

Its subcellular location is the cytoplasm. The protein operates within protein biosynthesis; polypeptide chain elongation. Its function is as follows. Involved in peptide bond synthesis. Stimulates efficient translation and peptide-bond synthesis on native or reconstituted 70S ribosomes in vitro. Probably functions indirectly by altering the affinity of the ribosome for aminoacyl-tRNA, thus increasing their reactivity as acceptors for peptidyl transferase. The sequence is that of Elongation factor P from Rickettsia akari (strain Hartford).